A 222-amino-acid polypeptide reads, in one-letter code: MQESIQLVIDSLPFLLKGAGYTLQLSIGGMFFGLLLGFILALMRLSPIWPVRWLARFYISIFRGTPLIAQLFMIYYGLPQFGIELDPIPSAMIGLSLNTAAYAAETLRAAISSIDKGQWEAAASIGMTPWQTMRRAILPQAARVALPPLSNSFISLVKDTSLAATIQVPELFRQAQLITSRTLEVFTMYLAASLIYWIMATVLSTLQNHFENQLNRQEREPK.

The Periplasmic portion of the chain corresponds to 1–22 (MQESIQLVIDSLPFLLKGAGYT). An ABC transmembrane type-1 domain is found at 19–207 (AGYTLQLSIG…IMATVLSTLQ (189 aa)). Residues 23-43 (LQLSIGGMFFGLLLGFILALM) form a helical membrane-spanning segment. Over 44–64 (RLSPIWPVRWLARFYISIFRG) the chain is Cytoplasmic. Residues 65 to 85 (TPLIAQLFMIYYGLPQFGIEL) form a helical membrane-spanning segment. Over 86–182 (DPIPSAMIGL…RQAQLITSRT (97 aa)) the chain is Periplasmic. The chain crosses the membrane as a helical span at residues 183–203 (LEVFTMYLAASLIYWIMATVL). The Cytoplasmic segment spans residues 204-222 (STLQNHFENQLNRQEREPK).

The protein belongs to the binding-protein-dependent transport system permease family. HisMQ subfamily. The complex is composed of two ATP-binding proteins (TcyN), two transmembrane proteins (TcyL) and a solute-binding protein (TcyJ).

The protein localises to the cell inner membrane. Part of the ABC transporter complex TcyJLN involved in L-cystine import. Responsible for the translocation of the substrate across the membrane. This chain is L-cystine transport system permease protein TcyL, found in Escherichia coli O6:H1 (strain CFT073 / ATCC 700928 / UPEC).